Here is an 81-residue protein sequence, read N- to C-terminus: Cytochrome b559 subunit alpha (81 aa).

The helical transmembrane segment at Val21–Trp35 threads the bilayer. His23 serves as a coordination point for heme.

It belongs to the PsbE/PsbF family. As to quaternary structure, heterodimer of an alpha subunit and a beta subunit. PSII is composed of 1 copy each of membrane proteins PsbA, PsbB, PsbC, PsbD, PsbE, PsbF, PsbH, PsbI, PsbJ, PsbK, PsbL, PsbM, PsbT, PsbX, PsbY, PsbZ, Psb30/Ycf12, at least 3 peripheral proteins of the oxygen-evolving complex and a large number of cofactors. It forms dimeric complexes. Heme b is required as a cofactor.

Its subcellular location is the plastid. The protein localises to the chloroplast thylakoid membrane. Its function is as follows. This b-type cytochrome is tightly associated with the reaction center of photosystem II (PSII). PSII is a light-driven water:plastoquinone oxidoreductase that uses light energy to abstract electrons from H(2)O, generating O(2) and a proton gradient subsequently used for ATP formation. It consists of a core antenna complex that captures photons, and an electron transfer chain that converts photonic excitation into a charge separation. This is Cytochrome b559 subunit alpha from Mesostigma viride (Green alga).